Reading from the N-terminus, the 366-residue chain is Peptide chain release factor 2 (366 aa).

Gln251 carries the N5-methylglutamine modification.

This sequence belongs to the prokaryotic/mitochondrial release factor family. In terms of processing, methylated by PrmC. Methylation increases the termination efficiency of RF2.

The protein resides in the cytoplasm. Functionally, peptide chain release factor 2 directs the termination of translation in response to the peptide chain termination codons UGA and UAA. This chain is Peptide chain release factor 2, found in Campylobacter concisus (strain 13826).